The primary structure comprises 248 residues: 1-(5-phosphoribosyl)-5-[(5-phosphoribosylamino)methylideneamino] imidazole-4-carboxamide isomerase (248 aa).

Residue Asp-11 is the Proton acceptor of the active site. Asp-132 acts as the Proton donor in catalysis.

The protein belongs to the HisA/HisF family.

The protein localises to the cytoplasm. It catalyses the reaction 1-(5-phospho-beta-D-ribosyl)-5-[(5-phospho-beta-D-ribosylamino)methylideneamino]imidazole-4-carboxamide = 5-[(5-phospho-1-deoxy-D-ribulos-1-ylimino)methylamino]-1-(5-phospho-beta-D-ribosyl)imidazole-4-carboxamide. Its pathway is amino-acid biosynthesis; L-histidine biosynthesis; L-histidine from 5-phospho-alpha-D-ribose 1-diphosphate: step 4/9. The protein is 1-(5-phosphoribosyl)-5-[(5-phosphoribosylamino)methylideneamino] imidazole-4-carboxamide isomerase of Afipia carboxidovorans (strain ATCC 49405 / DSM 1227 / KCTC 32145 / OM5) (Oligotropha carboxidovorans).